A 154-amino-acid chain; its full sequence is Acidic phospholipase A2 2 (154 aa).

The N-terminal stretch at 1 to 19 is a signal peptide; the sequence is MHPAHLLVPLGVCVSLLGA. A propeptide spanning residues 20–27 is cleaved from the precursor; sequence ARIPPLPL. 7 cysteine pairs are disulfide-bonded: C38-C104, C54-C153, C56-C72, C71-C132, C78-C125, C88-C118, and C111-C123. Residues Y55, G57, and G59 each contribute to the Ca(2+) site. Residue H75 is part of the active site. Position 76 (D76) interacts with Ca(2+). The active site involves D126.

It belongs to the phospholipase A2 family. Group I subfamily. D49 sub-subfamily. Monomer. The cofactor is Ca(2+). As to expression, expressed by the venom gland.

The protein resides in the secreted. It carries out the reaction a 1,2-diacyl-sn-glycero-3-phosphocholine + H2O = a 1-acyl-sn-glycero-3-phosphocholine + a fatty acid + H(+). Functionally, snake venom phospholipase A2 (PLA2) that shows moderate enzymatic activity and exhibits procoagulant activity. PLA2 catalyzes the calcium-dependent hydrolysis of the 2-acyl groups in 3-sn-phosphoglycerides. The protein is Acidic phospholipase A2 2 of Pseudonaja textilis (Eastern brown snake).